A 204-amino-acid chain; its full sequence is MDRVLLLLSVLTLGVSSQQIIENQRLFSMDATRVQHLHLLAQRLFSDFESSLQTEEQRQLNKIFLQDFCNSDYIISPIDKHETQRSSVLKLLSISYRLVESWEFPSRSLSGGSAPRNQISPKLSELKMGILLLIRANQDAAEIFPDNSALQLAPYGNYYQSLSGEESLRRTYELLACFKKDMHKVETYLTVAKCRLSPEANCTL.

Residues 1–17 form the signal peptide; the sequence is MDRVLLLLSVLTLGVSS. The residue at position 18 (glutamine 18) is a Pyrrolidone carboxylic acid. Histidine 36 provides a ligand contact to Zn(2+). Cysteine 69 and cysteine 177 form a disulfide bridge. Residue glutamate 186 participates in Zn(2+) binding. A disulfide bridge links cysteine 194 with cysteine 202.

This sequence belongs to the somatotropin/prolactin family.

The protein localises to the secreted. In terms of biological role, growth hormone plays an important role in growth control and is involved in the regulation of several anabolic processes. Implicated as an osmoregulatory substance important for seawater adaptation. This is Somatotropin (gh) from Larimichthys crocea (Large yellow croaker).